A 447-amino-acid polypeptide reads, in one-letter code: Exodeoxyribonuclease 7 large subunit (447 aa).

This sequence belongs to the XseA family. As to quaternary structure, heterooligomer composed of large and small subunits.

It localises to the cytoplasm. The catalysed reaction is Exonucleolytic cleavage in either 5'- to 3'- or 3'- to 5'-direction to yield nucleoside 5'-phosphates.. Functionally, bidirectionally degrades single-stranded DNA into large acid-insoluble oligonucleotides, which are then degraded further into small acid-soluble oligonucleotides. This chain is Exodeoxyribonuclease 7 large subunit, found in Geobacter sulfurreducens (strain ATCC 51573 / DSM 12127 / PCA).